The following is a 264-amino-acid chain: Glucosamine-6-phosphate deaminase (264 aa).

Residue Asp-67 is the Proton acceptor; for enolization step of the active site. The active-site For ring-opening step is the Asn-136. His-138 (proton acceptor; for ring-opening step) is an active-site residue. Glu-143 (for ring-opening step) is an active-site residue.

It belongs to the glucosamine/galactosamine-6-phosphate isomerase family. NagB subfamily. As to quaternary structure, homohexamer.

It carries out the reaction alpha-D-glucosamine 6-phosphate + H2O = beta-D-fructose 6-phosphate + NH4(+). It functions in the pathway amino-sugar metabolism; N-acetylneuraminate degradation; D-fructose 6-phosphate from N-acetylneuraminate: step 5/5. Its function is as follows. Catalyzes the reversible isomerization-deamination of glucosamine 6-phosphate (GlcN6P) to form fructose 6-phosphate (Fru6P) and ammonium ion. The sequence is that of Glucosamine-6-phosphate deaminase from Shewanella woodyi (strain ATCC 51908 / MS32).